The sequence spans 169 residues: Diuretic hormone 44 (169 aa).

The N-terminal stretch at 1–18 (MILLGILASTTIIGLTSS) is a signal peptide. A propeptide spanning residues 19–96 (APLSSYERRD…ARRKQERDQR (78 aa)) is cleaved from the precursor. Residues 83 to 108 (MLELARRKQERDQRQIEENRRFLENI) adopt a coiled-coil conformation. The residue at position 97 (Q97) is a Pyrrolidone carboxylic acid. I108 is subject to Isoleucine amide. A propeptide spanning residues 109–169 (GKRSVPVSDA…RVQANELRLL (61 aa)) is cleaved from the precursor.

Residues Ile-66 to Gly-109 may constitute another form of the DH44 peptide, which has not been detected yet. Expressed in brain, ventral ganglia and the retrocerebral complex (at protein level).

It localises to the secreted. In terms of biological role, regulation of fluid secretion. The polypeptide is Diuretic hormone 44 (Camponotus floridanus (Florida carpenter ant)).